Reading from the N-terminus, the 204-residue chain is Small ribosomal subunit protein uS4 (204 aa).

One can recognise an S4 RNA-binding domain in the interval 95-157 (RRLDNTVFRM…KGIHSIIRHN (63 aa)).

It belongs to the universal ribosomal protein uS4 family. In terms of assembly, part of the 30S ribosomal subunit. Contacts protein S5. The interaction surface between S4 and S5 is involved in control of translational fidelity.

Functionally, one of the primary rRNA binding proteins, it binds directly to 16S rRNA where it nucleates assembly of the body of the 30S subunit. With S5 and S12 plays an important role in translational accuracy. This is Small ribosomal subunit protein uS4 from Treponema pallidum (strain Nichols).